A 261-amino-acid polypeptide reads, in one-letter code: Peroxiredoxin PRX1, mitochondrial (261 aa).

A mitochondrion-targeting transit peptide spans 1-13; sequence MFSRICSAQLKRT. Residues 49–212 enclose the Thioredoxin domain; the sequence is LRINSDAPNF…VLRVIDALQL (164 aa). Residue Ser53 is modified to Phosphoserine. Cys91 functions as the Cysteine sulfenic acid (-SOH) intermediate in the catalytic mechanism.

It belongs to the peroxiredoxin family. Prx6 subfamily. In terms of assembly, homodimer; disulfide-linked.

Its subcellular location is the mitochondrion. It catalyses the reaction a hydroperoxide + 2 glutathione = an alcohol + glutathione disulfide + H2O. It carries out the reaction [glutaredoxin]-dithiol + a hydroperoxide = [glutaredoxin]-disulfide + an alcohol + H2O. Its function is as follows. Thiol-specific peroxidase that catalyzes the reduction of hydrogen peroxide and organic hydroperoxides to water and alcohols, respectively. Plays a role in cell protection against oxidative stress by detoxifying peroxides and as sensor of hydrogen peroxide-mediated signaling events. Involved in mitochondrial protection of cadmium-induced oxidative stress. This chain is Peroxiredoxin PRX1, mitochondrial, found in Saccharomyces cerevisiae (strain ATCC 204508 / S288c) (Baker's yeast).